Here is a 200-residue protein sequence, read N- to C-terminus: MSIKKKTEMNKSIKGSKTEKHLLMAFAGESQARSRYTFFASVAKKEGYEQIAGVFMETAEQEKEHAKRFFSFLEGGMLEITASFPAGIIGSTAENLRAAAAGENEEWTDLYPAFAETAEEEGFKEIAAVFRQIAKVEAEHERRYLALLAHVEDGSVFERTEEIAWQCRNCGYVITSKKAPKLCPACAHPQAYFEPMKTNY.

Residues 12–155 (SIKGSKTEKH…ALLAHVEDGS (144 aa)) enclose the Ferritin-like diiron domain. Fe(3+) is bound by residues Glu29, Glu62, Glu103, Glu106, Glu137, His140, Cys167, Cys170, Cys183, and Cys186. The region spanning 162–200 (EIAWQCRNCGYVITSKKAPKLCPACAHPQAYFEPMKTNY) is the Rubredoxin-like domain.

In terms of assembly, homodimer. Possesses two rubredoxin-like centers and two non-sulfur oxo-bridged di-iron centers per dimer. Fe(3+) is required as a cofactor.

Its subcellular location is the cytoplasm. Its function is as follows. May provide oxidative stress protection via catalytic reduction of intracellular hydrogen peroxide. The chain is Rubrerythrin (rbr) from Porphyromonas gingivalis (strain ATCC BAA-308 / W83).